The chain runs to 299 residues: Glutamyl-Q tRNA(Asp) synthetase (299 aa).

Residues 18-22 (RFAPS) and E54 each bind L-glutamate. Residues 21–31 (PSPSGALHFGS) carry the 'HIGH' region motif. The Zn(2+) site is built by C110, C112, Y124, and C128. Residues Y181 and R199 each coordinate L-glutamate. A 'KMSKS' region motif is present at residues 237-241 (KLSKQ). Residue K240 participates in ATP binding.

Belongs to the class-I aminoacyl-tRNA synthetase family. GluQ subfamily. Zn(2+) serves as cofactor.

Functionally, catalyzes the tRNA-independent activation of glutamate in presence of ATP and the subsequent transfer of glutamate onto a tRNA(Asp). Glutamate is transferred on the 2-amino-5-(4,5-dihydroxy-2-cyclopenten-1-yl) moiety of the queuosine in the wobble position of the QUC anticodon. This Shewanella oneidensis (strain ATCC 700550 / JCM 31522 / CIP 106686 / LMG 19005 / NCIMB 14063 / MR-1) protein is Glutamyl-Q tRNA(Asp) synthetase.